The following is a 168-amino-acid chain: Sensor histidine kinase component HK1 (168 aa).

Residues 1–141 (MPITPLLHES…ELRITLPTPR (141 aa)) form the Histidine kinase; second part domain. Residues 137–168 (LPTPRPPFHEELPRITSSDTKDPNREHDTSDQ) are disordered. Basic and acidic residues predominate over residues 143-168 (PFHEELPRITSSDTKDPNREHDTSDQ).

As to quaternary structure, interacts with HK2.

It catalyses the reaction ATP + protein L-histidine = ADP + protein N-phospho-L-histidine.. Member of the three-protein two-component system HK1/HK2/TcrA. Kinase that binds ATP and catalyzes the transfer of a phosphoryl group from ATP to HK2. The chain is Sensor histidine kinase component HK1 from Mycobacterium tuberculosis (strain ATCC 25618 / H37Rv).